Here is a 279-residue protein sequence, read N- to C-terminus: MTSAAAIPTVILNDDNTMPVIGLGVGELSDAEAEQSVLAALEAGYRLIDTAAAYGNEAAVGRAIAKSGVPRGELFVTTKLATDDLGFQSSQDALRASLERLGLDYVDLYLIHWPAGSQGTYVDSWGGLMKLKELGLTRSIGVSNFHAQHLDDIIGLSFFTPAVNQIELHPLLNQAELRAVNAEHGIVTEAYSPLGVGSLLSNPAVTAIADAQDRTPAQVLIRWSLQLGNVVISRSSSPERIKSNLDVFDFELTADQMAALDGLDEGTRFRPDPETYTGS.

Y54 (proton donor) is an active-site residue. NADPH-binding residues include L194, V196, I232, R234, S235, R240, S243, N244, and R270.

It belongs to the aldo/keto reductase family.

The polypeptide is Aldo-keto reductase Mvan_2161 (Mycolicibacterium vanbaalenii (strain DSM 7251 / JCM 13017 / BCRC 16820 / KCTC 9966 / NRRL B-24157 / PYR-1) (Mycobacterium vanbaalenii)).